The primary structure comprises 330 residues: Aspartate--ammonia ligase (330 aa).

It belongs to the class-II aminoacyl-tRNA synthetase family. AsnA subfamily.

The protein resides in the cytoplasm. It carries out the reaction L-aspartate + NH4(+) + ATP = L-asparagine + AMP + diphosphate + H(+). The protein operates within amino-acid biosynthesis; L-asparagine biosynthesis; L-asparagine from L-aspartate (ammonia route): step 1/1. This is Aspartate--ammonia ligase from Yersinia pseudotuberculosis serotype O:1b (strain IP 31758).